The chain runs to 201 residues: Thymidine kinase (201 aa).

ATP-binding positions include 9–16 (SAMNAGKS) and 87–90 (DECH). Glu-88 functions as the Proton acceptor in the catalytic mechanism. 4 residues coordinate Zn(2+): Cys-145, Cys-147, Cys-182, and His-185.

Belongs to the thymidine kinase family. As to quaternary structure, homotetramer.

The protein localises to the cytoplasm. The enzyme catalyses thymidine + ATP = dTMP + ADP + H(+). In Photorhabdus laumondii subsp. laumondii (strain DSM 15139 / CIP 105565 / TT01) (Photorhabdus luminescens subsp. laumondii), this protein is Thymidine kinase.